Reading from the N-terminus, the 238-residue chain is Large ribosomal subunit protein uL1 (238 aa).

The protein belongs to the universal ribosomal protein uL1 family. Part of the 50S ribosomal subunit.

Binds directly to 23S rRNA. The L1 stalk is quite mobile in the ribosome, and is involved in E site tRNA release. In terms of biological role, protein L1 is also a translational repressor protein, it controls the translation of the L11 operon by binding to its mRNA. In Nostoc sp. (strain PCC 7120 / SAG 25.82 / UTEX 2576), this protein is Large ribosomal subunit protein uL1.